The sequence spans 174 residues: MRVSVFAVGRMKSGPERELVERYFDRFAKAGPPLGLEFAGVSEIPESRGQTAQLRKAEEAQRIHEALDNAKSGGAKSGGTSSGGAALILLDERGKTLGSEAFAAIVGRMRDDGKRQLIVAIGGPDGHDPALRSRADLVLALGELTWPHQIARILIAEQLYRAATILAGHPYHRS.

S-adenosyl-L-methionine contacts are provided by residues leucine 90, glycine 122, and 141 to 146; that span reads LGELTW.

This sequence belongs to the RNA methyltransferase RlmH family. In terms of assembly, homodimer.

It localises to the cytoplasm. It catalyses the reaction pseudouridine(1915) in 23S rRNA + S-adenosyl-L-methionine = N(3)-methylpseudouridine(1915) in 23S rRNA + S-adenosyl-L-homocysteine + H(+). Functionally, specifically methylates the pseudouridine at position 1915 (m3Psi1915) in 23S rRNA. This is Ribosomal RNA large subunit methyltransferase H from Brucella melitensis biotype 2 (strain ATCC 23457).